A 43-amino-acid chain; its full sequence is U5-hexatoxin-Mr1a (43 aa).

4 disulfide bridges follow: C1-C16, C8-C21, C15-C36, and C17-C43.

The protein belongs to the neurotoxin 35 family. In terms of processing, contains 4 disulfide bonds. As to expression, expressed by the venom gland.

It localises to the secreted. Its function is as follows. This toxin blocks the neuromuscular transmission, and also acts on muscle. It exerts an effect of first exciting and then inhibiting the contraction of muscle. This toxin is active only against mammals. This chain is U5-hexatoxin-Mr1a, found in Macrothele raveni (Funnel-web spider).